The chain runs to 340 residues: DNA-directed RNA polymerase subunit alpha (340 aa).

The tract at residues 1 to 236 is alpha N-terminal domain (alpha-NTD); the sequence is MLSLSKNWNT…EQLQLFISFE (236 aa). The segment at 251 to 340 is alpha C-terminal domain (alpha-CTD); that stretch reads FSPYLLKRVD…LSKRYEDSYN (90 aa).

Belongs to the RNA polymerase alpha chain family. Homodimer. The RNAP catalytic core consists of 2 alpha, 1 beta, 1 beta' and 1 omega subunit. When a sigma factor is associated with the core the holoenzyme is formed, which can initiate transcription.

The enzyme catalyses RNA(n) + a ribonucleoside 5'-triphosphate = RNA(n+1) + diphosphate. Functionally, DNA-dependent RNA polymerase catalyzes the transcription of DNA into RNA using the four ribonucleoside triphosphates as substrates. This Rickettsia rickettsii (strain Iowa) protein is DNA-directed RNA polymerase subunit alpha.